The chain runs to 426 residues: Glutamate-1-semialdehyde 2,1-aminomutase (426 aa).

Lysine 265 is modified (N6-(pyridoxal phosphate)lysine).

It belongs to the class-III pyridoxal-phosphate-dependent aminotransferase family. HemL subfamily. Homodimer. Requires pyridoxal 5'-phosphate as cofactor.

Its subcellular location is the cytoplasm. It carries out the reaction (S)-4-amino-5-oxopentanoate = 5-aminolevulinate. The protein operates within porphyrin-containing compound metabolism; protoporphyrin-IX biosynthesis; 5-aminolevulinate from L-glutamyl-tRNA(Glu): step 2/2. This chain is Glutamate-1-semialdehyde 2,1-aminomutase, found in Pectobacterium carotovorum subsp. carotovorum (strain PC1).